Consider the following 212-residue polypeptide: Large ribosomal subunit protein uL1 (212 aa).

It belongs to the universal ribosomal protein uL1 family. Part of the 50S ribosomal subunit.

Binds directly to 23S rRNA. Probably involved in E site tRNA release. Functionally, protein L1 is also a translational repressor protein, it controls the translation of its operon by binding to its mRNA. The protein is Large ribosomal subunit protein uL1 of Halobacterium salinarum (strain ATCC 29341 / DSM 671 / R1).